The chain runs to 258 residues: Acetylglutamate kinase (258 aa).

Substrate-binding positions include 44–45 (GG), R66, and N158. Residues 181–186 (DVSGIL) and 209–211 (IIT) contribute to the ATP site.

This sequence belongs to the acetylglutamate kinase family. ArgB subfamily. In terms of assembly, homodimer.

The protein resides in the cytoplasm. It carries out the reaction N-acetyl-L-glutamate + ATP = N-acetyl-L-glutamyl 5-phosphate + ADP. It functions in the pathway amino-acid biosynthesis; L-arginine biosynthesis; N(2)-acetyl-L-ornithine from L-glutamate: step 2/4. Catalyzes the ATP-dependent phosphorylation of N-acetyl-L-glutamate. In Salmonella arizonae (strain ATCC BAA-731 / CDC346-86 / RSK2980), this protein is Acetylglutamate kinase.